The sequence spans 3032 residues: Compactin nonaketide synthase, polyketide synthase component (3032 aa).

Residues 8 to 447 form the Ketosynthase family 3 (KS3) domain; that stretch reads NEPIVVVGSG…GTNAHAIIEE (440 aa). Residues cysteine 181, histidine 320, and histidine 367 each act as for beta-ketoacyl synthase activity in the active site. Residues 560-901 form an acyl and malonyl transferase region; that stretch reads VFTGQGAQWP…GYIWERFGVR (342 aa). Serine 654 (for malonyltransferase activity) is an active-site residue. The N-terminal hotdog fold stretch occupies residues 953–1089; the sequence is HLLLGKLSSY…GQIVITLGEA (137 aa). The PKS/mFAS DH domain maps to 953 to 1261; the sequence is HLLLGKLSSY…FKPFSPPTAS (309 aa). Histidine 985 (proton acceptor; for dehydratase activity) is an active-site residue. The interval 985–997 is dehydratase-like; that stretch reads HALQGQTVFPAAG. Residues 1106 to 1261 form a C-terminal hotdog fold region; it reads MNNVNIDFFY…FKPFSPPTAS (156 aa). Catalysis depends on aspartate 1168, which acts as the Proton donor; for dehydratase activity. A methyltransferase region spans residues 1506 to 1544; sequence YDLIIASDVLHASSNFEEKLAHIRSLLKPGGHLVTFGVT. The Carrier domain occupies 2441 to 2520; it reads DQVRQIVIDG…DLADDAATRL (80 aa). Serine 2480 carries the O-(pantetheine 4'-phosphoryl)serine modification. Residues 2531-2580 are disordered; the sequence is IGDSTGTSDSGASPTPTDSHDEASSATSTDASSAEEDEEQEDDNEQGGRK. Low complexity predominate over residues 2532 to 2547; it reads GDSTGTSDSGASPTPT. Residues 2563–2575 show a composition bias toward acidic residues; that stretch reads SAEEDEEQEDDNE. Positions 2586 to 2946 are peptide synthetase elongation; the sequence is RLSLGQEYSW…PKTQTHAPLF (361 aa).

Requires pantetheine 4'-phosphate as cofactor.

The enzyme catalyses holo-[compactin nonaketide synthase] + 9 malonyl-CoA + 11 NADPH + 20 H(+) = dihydro-ML-236C-[compactin nonaketide synthase] + 9 CO2 + 11 NADP(+) + 9 CoA + 6 H2O. It participates in polyketide biosynthesis. In terms of biological role, nonaketide synthase; part of the gene cluster that mediates the biosynthesis of compactin, also known as mevastatin or ML-236B, and which acts as a potent competitive inhibitor of HMG-CoA reductase. Compactin biosynthesis is performed in two stages. The first stage is catalyzed by the nonaketide synthase mlcA, which belongs to type I polyketide synthases and catalyzes the iterative nine-step formation of the polyketide. This PKS stage is completed by the action of dehydrogenase mlcG, which catalyzes the NADPH-dependent reduction of the unsaturated tetra-, penta- and heptaketide intermediates that arise during the mlcA-mediated biosynthesis of the nonaketide chain and leads to dihydro-ML-236C carboxylate. Covalently bound dihydro-ML-236C carboxylate is released from mlcA by the mlcF esterase. Conversion of dihydro-ML-236C carboxylate into ML-236A carboxylate is subsequently performed with the participation of molecular oxygen and P450 monoogygenase mlcC. Finally, mlcH performs the conversion of ML-236A carboxylate to ML-236B/compactin carboxylate through the addition of the side-chain diketide moiety produced by the diketide synthase mlcB. This chain is Compactin nonaketide synthase, polyketide synthase component, found in Penicillium citrinum.